The chain runs to 308 residues: Ribonuclease Z (308 aa).

Zn(2+) is bound by residues His62, His64, Asp66, His67, His140, Asp211, and His269. Asp66 serves as the catalytic Proton acceptor.

The protein belongs to the RNase Z family. In terms of assembly, homodimer. It depends on Zn(2+) as a cofactor.

It carries out the reaction Endonucleolytic cleavage of RNA, removing extra 3' nucleotides from tRNA precursor, generating 3' termini of tRNAs. A 3'-hydroxy group is left at the tRNA terminus and a 5'-phosphoryl group is left at the trailer molecule.. Zinc phosphodiesterase, which displays some tRNA 3'-processing endonuclease activity. Probably involved in tRNA maturation, by removing a 3'-trailer from precursor tRNA. This is Ribonuclease Z from Treponema denticola (strain ATCC 35405 / DSM 14222 / CIP 103919 / JCM 8153 / KCTC 15104).